The chain runs to 302 residues: Oxygen-dependent coproporphyrinogen-III oxidase (302 aa).

A substrate-binding site is contributed by serine 94. Positions 98 and 108 each coordinate a divalent metal cation. Histidine 108 acts as the Proton donor in catalysis. A substrate-binding site is contributed by 110 to 112 (NVR). A divalent metal cation contacts are provided by histidine 147 and histidine 177. Residues 242-277 (YVEFNLVYDRGTLFGLQTGGRTESILMSMPPLVRWQ) form an important for dimerization region. Residue 260-262 (GGR) participates in substrate binding.

This sequence belongs to the aerobic coproporphyrinogen-III oxidase family. In terms of assembly, homodimer. It depends on a divalent metal cation as a cofactor.

It localises to the cytoplasm. The catalysed reaction is coproporphyrinogen III + O2 + 2 H(+) = protoporphyrinogen IX + 2 CO2 + 2 H2O. It functions in the pathway porphyrin-containing compound metabolism; protoporphyrin-IX biosynthesis; protoporphyrinogen-IX from coproporphyrinogen-III (O2 route): step 1/1. Functionally, involved in the heme biosynthesis. Catalyzes the aerobic oxidative decarboxylation of propionate groups of rings A and B of coproporphyrinogen-III to yield the vinyl groups in protoporphyrinogen-IX. The sequence is that of Oxygen-dependent coproporphyrinogen-III oxidase from Shewanella oneidensis (strain ATCC 700550 / JCM 31522 / CIP 106686 / LMG 19005 / NCIMB 14063 / MR-1).